The sequence spans 518 residues: Probable Xaa-Pro aminopeptidase HCDG_07916 (518 aa).

Mn(2+) contacts are provided by Asp289, Asp300, Glu437, and Glu475.

This sequence belongs to the peptidase M24B family. Mn(2+) serves as cofactor.

The enzyme catalyses Release of any N-terminal amino acid, including proline, that is linked to proline, even from a dipeptide or tripeptide.. Its function is as follows. Catalyzes the removal of a penultimate prolyl residue from the N-termini of peptides. The protein is Probable Xaa-Pro aminopeptidase HCDG_07916 of Ajellomyces capsulatus (strain H143) (Darling's disease fungus).